A 438-amino-acid polypeptide reads, in one-letter code: UDP-N-acetylmuramoylalanine--D-glutamate ligase (438 aa).

Position 115 to 121 (115 to 121 (GSNGKST)) interacts with ATP.

Belongs to the MurCDEF family.

It is found in the cytoplasm. The enzyme catalyses UDP-N-acetyl-alpha-D-muramoyl-L-alanine + D-glutamate + ATP = UDP-N-acetyl-alpha-D-muramoyl-L-alanyl-D-glutamate + ADP + phosphate + H(+). It participates in cell wall biogenesis; peptidoglycan biosynthesis. Its function is as follows. Cell wall formation. Catalyzes the addition of glutamate to the nucleotide precursor UDP-N-acetylmuramoyl-L-alanine (UMA). This is UDP-N-acetylmuramoylalanine--D-glutamate ligase from Vibrio atlanticus (strain LGP32) (Vibrio splendidus (strain Mel32)).